The primary structure comprises 144 residues: Nucleoside diphosphate kinase (144 aa).

Residues lysine 9, phenylalanine 57, arginine 85, threonine 91, arginine 102, and asparagine 112 each coordinate ATP. Histidine 115 serves as the catalytic Pros-phosphohistidine intermediate.

This sequence belongs to the NDK family. As to quaternary structure, homotetramer. Mg(2+) is required as a cofactor.

The protein localises to the cytoplasm. The catalysed reaction is a 2'-deoxyribonucleoside 5'-diphosphate + ATP = a 2'-deoxyribonucleoside 5'-triphosphate + ADP. It carries out the reaction a ribonucleoside 5'-diphosphate + ATP = a ribonucleoside 5'-triphosphate + ADP. In terms of biological role, major role in the synthesis of nucleoside triphosphates other than ATP. The ATP gamma phosphate is transferred to the NDP beta phosphate via a ping-pong mechanism, using a phosphorylated active-site intermediate. This is Nucleoside diphosphate kinase from Chlamydia pneumoniae (Chlamydophila pneumoniae).